A 104-amino-acid chain; its full sequence is MQSCITVIGERDVVLGFRLLGITNTIVAEGKDLVKKFMEEFENPHCSVIVVSEHLKNMIDKKTLRSIEVSSKPLVVFIPLPGFKEEESIETMAKRILGIDIGSV.

Belongs to the V-ATPase F subunit family. As to quaternary structure, has multiple subunits with at least A(3), B(3), C, D, E, F, H, I and proteolipid K(x).

Its subcellular location is the cell membrane. In terms of biological role, component of the A-type ATP synthase that produces ATP from ADP in the presence of a proton gradient across the membrane. The chain is A-type ATP synthase subunit F from Thermoplasma volcanium (strain ATCC 51530 / DSM 4299 / JCM 9571 / NBRC 15438 / GSS1).